We begin with the raw amino-acid sequence, 189 residues long: Flavin prenyltransferase UbiX (189 aa).

FMN contacts are provided by residues 10-12 (GAS), S37, 88-91 (SIKT), and R123. Dimethylallyl phosphate is bound by residues Y153 and R169.

It belongs to the UbiX/PAD1 family.

The enzyme catalyses dimethylallyl phosphate + FMNH2 = prenylated FMNH2 + phosphate. It participates in cofactor biosynthesis; ubiquinone biosynthesis. Functionally, flavin prenyltransferase that catalyzes the synthesis of the prenylated FMN cofactor (prenyl-FMN) for 4-hydroxy-3-polyprenylbenzoic acid decarboxylase UbiD. The prenyltransferase is metal-independent and links a dimethylallyl moiety from dimethylallyl monophosphate (DMAP) to the flavin N5 and C6 atoms of FMN. The sequence is that of Flavin prenyltransferase UbiX from Escherichia coli O157:H7.